The following is a 168-amino-acid chain: Ribosome maturation factor RimM (168 aa).

The region spanning 93–168 is the PRC barrel domain; sequence EDEFYQSDLV…IVLNIPEFID (76 aa).

Belongs to the RimM family. Binds ribosomal protein uS19.

It is found in the cytoplasm. An accessory protein needed during the final step in the assembly of 30S ribosomal subunit, possibly for assembly of the head region. Essential for efficient processing of 16S rRNA. May be needed both before and after RbfA during the maturation of 16S rRNA. It has affinity for free ribosomal 30S subunits but not for 70S ribosomes. This chain is Ribosome maturation factor RimM, found in Wolbachia pipientis wMel.